The following is a 125-amino-acid chain: Large ribosomal subunit protein bL12 (125 aa).

Belongs to the bacterial ribosomal protein bL12 family. In terms of assembly, homodimer. Part of the ribosomal stalk of the 50S ribosomal subunit. Forms a multimeric L10(L12)X complex, where L10 forms an elongated spine to which 2 to 4 L12 dimers bind in a sequential fashion. Binds GTP-bound translation factors.

In terms of biological role, forms part of the ribosomal stalk which helps the ribosome interact with GTP-bound translation factors. Is thus essential for accurate translation. This is Large ribosomal subunit protein bL12 from Bradyrhizobium sp. (strain ORS 278).